Reading from the N-terminus, the 840-residue chain is Leucine--tRNA ligase (840 aa).

The 'HIGH' region signature appears at 44–55 (PYPSANGLHVGH). A 'KMSKS' region motif is present at residues 617 to 621 (KMSKS). ATP is bound at residue K620.

It belongs to the class-I aminoacyl-tRNA synthetase family.

Its subcellular location is the cytoplasm. The catalysed reaction is tRNA(Leu) + L-leucine + ATP = L-leucyl-tRNA(Leu) + AMP + diphosphate. The chain is Leucine--tRNA ligase from Borreliella burgdorferi (strain ZS7) (Borrelia burgdorferi).